The chain runs to 208 residues: Large ribosomal subunit protein uL3 (208 aa).

Position 149 is an N5-methylglutamine (Gln-149).

This sequence belongs to the universal ribosomal protein uL3 family. As to quaternary structure, part of the 50S ribosomal subunit. Forms a cluster with proteins L14 and L19. In terms of processing, methylated by PrmB.

Functionally, one of the primary rRNA binding proteins, it binds directly near the 3'-end of the 23S rRNA, where it nucleates assembly of the 50S subunit. The chain is Large ribosomal subunit protein uL3 from Haemophilus influenzae (strain PittGG).